Here is a 385-residue protein sequence, read N- to C-terminus: Transmembrane protein 271 (385 aa).

Transmembrane regions (helical) follow at residues 9 to 29 (CAAL…AVGL) and 50 to 70 (GAFY…AALL). A disordered region spans residues 83–111 (EPGPGLGVPAAPAGAPEATPGESGAAAGA). Residues 121–141 (LLLGVLVFMLGVLSAFAGAVI) form a helical membrane-spanning segment. A disordered region spans residues 160–203 (PRAPGSSPGSAPGSTPGSAPGSAPGSAPGSAPGAPRARSTLDSA). Residues 163–197 (PGSSPGSAPGSTPGSAPGSAPGSAPGSAPGAPRAR) show a composition bias toward low complexity. Residues 219 to 239 (VLSTVFNSLECLLGLLSLLLV) form a helical membrane-spanning segment. The disordered stretch occupies residues 245 to 305 (SQARRGRRGR…SEASILSPEE (61 aa)). Basic residues predominate over residues 246–258 (QARRGRRGRRRGG). Low complexity predominate over residues 259 to 277 (RALARPRGGSGLRAQPPAS). Basic residues predominate over residues 278–292 (RARRGRRGRRGRRLQ).

Its subcellular location is the membrane. The chain is Transmembrane protein 271 from Homo sapiens (Human).